The primary structure comprises 291 residues: Homoserine kinase (291 aa).

ATP is bound at residue 79-89; that stretch reads PLARGLGSSSA.

The protein belongs to the GHMP kinase family. Homoserine kinase subfamily.

It localises to the cytoplasm. It catalyses the reaction L-homoserine + ATP = O-phospho-L-homoserine + ADP + H(+). It functions in the pathway amino-acid biosynthesis; L-threonine biosynthesis; L-threonine from L-aspartate: step 4/5. Catalyzes the ATP-dependent phosphorylation of L-homoserine to L-homoserine phosphate. This Leuconostoc citreum (strain KM20) protein is Homoserine kinase.